Consider the following 934-residue polypeptide: Sorting nexin-14 (934 aa).

2 helical membrane passes run 27–47 (YPVI…LNQY) and 48–68 (LHIL…YCSL). In terms of domain architecture, PXA spans 129 to 303 (PSKVDASISE…MVLIFIDDSP (175 aa)). Residues 335–467 (DLKEIREQQD…CHSDEYFRHL (133 aa)) form the RGS domain. The 121-residue stretch at 557–677 (WTISIPYVDF…DFLSPFSMES (121 aa)) folds into the PX domain.

Belongs to the sorting nexin family.

The protein localises to the lysosome membrane. Its subcellular location is the late endosome membrane. The protein resides in the cell projection. It is found in the dendrite. In terms of biological role, plays a role in maintaining normal neuronal excitability and synaptic transmission. May be involved in several stages of intracellular trafficking. Required for autophagosome clearance, possibly by mediating the fusion of lysosomes with autophagosomes. Binds phosphatidylinositol 3,5-bisphosphate (PtdIns(3,5)P2), a key component of late endosomes/lysosomes. Does not bind phosphatidylinositol 3-phosphate (PtdIns(3P)). This chain is Sorting nexin-14, found in Danio rerio (Zebrafish).